The primary structure comprises 933 residues: Isoleucine--tRNA ligase (933 aa).

Residues 57–67 (PYANGNIHVGH) carry the 'HIGH' region motif. Glu554 contributes to the L-isoleucyl-5'-AMP binding site. Residues 595–599 (KMSKS) carry the 'KMSKS' region motif. Lys598 lines the ATP pocket.

The protein belongs to the class-I aminoacyl-tRNA synthetase family. IleS type 1 subfamily. As to quaternary structure, monomer.

It localises to the cytoplasm. It carries out the reaction tRNA(Ile) + L-isoleucine + ATP = L-isoleucyl-tRNA(Ile) + AMP + diphosphate. Functionally, catalyzes the attachment of isoleucine to tRNA(Ile). As IleRS can inadvertently accommodate and process structurally similar amino acids such as valine, to avoid such errors it has two additional distinct tRNA(Ile)-dependent editing activities. One activity is designated as 'pretransfer' editing and involves the hydrolysis of activated Val-AMP. The other activity is designated 'posttransfer' editing and involves deacylation of mischarged Val-tRNA(Ile). The polypeptide is Isoleucine--tRNA ligase (Streptococcus pyogenes serotype M6 (strain ATCC BAA-946 / MGAS10394)).